The chain runs to 276 residues: Large ribosomal subunit protein uL2 (276 aa).

Disordered stretches follow at residues 1-20 and 219-276; these read MGIKKYNPTTNGRRNMTTND and TVRG…RRKK. The span at 7-20 shows a compositional bias: polar residues; sequence NPTTNGRRNMTTND.

Belongs to the universal ribosomal protein uL2 family. Part of the 50S ribosomal subunit. Forms a bridge to the 30S subunit in the 70S ribosome.

One of the primary rRNA binding proteins. Required for association of the 30S and 50S subunits to form the 70S ribosome, for tRNA binding and peptide bond formation. It has been suggested to have peptidyltransferase activity; this is somewhat controversial. Makes several contacts with the 16S rRNA in the 70S ribosome. This Bacillus mycoides (strain KBAB4) (Bacillus weihenstephanensis) protein is Large ribosomal subunit protein uL2.